A 129-amino-acid chain; its full sequence is Small ribosomal subunit protein uS11c (129 aa).

This sequence belongs to the universal ribosomal protein uS11 family. As to quaternary structure, part of the 30S ribosomal subunit.

The protein localises to the plastid. It is found in the chloroplast. The protein is Small ribosomal subunit protein uS11c of Cyanidium caldarium (Red alga).